Reading from the N-terminus, the 621-residue chain is Auxin response factor 13 (621 aa).

The TF-B3 DNA-binding region spans 124 to 228 (FSKILTASDV…ELRFGIRRAK (105 aa)). Positions 508-600 (RSRIKVHMQG…EIKKMKLKNK (93 aa)) constitute a PB1 domain.

This sequence belongs to the ARF family. Homodimers and heterodimers.

Its subcellular location is the nucleus. Auxin response factors (ARFs) are transcriptional factors that bind specifically to the DNA sequence 5'-TGTCTC-3' found in the auxin-responsive promoter elements (AuxREs). Could act as transcriptional activator or repressor. Formation of heterodimers with Aux/IAA proteins may alter their ability to modulate early auxin response genes expression. This Arabidopsis thaliana (Mouse-ear cress) protein is Auxin response factor 13 (ARF13).